A 468-amino-acid chain; its full sequence is Nicotinamide phosphoribosyltransferase (468 aa).

Residue Arg180 coordinates diphosphate. Residue Asp203 participates in beta-nicotinamide D-ribonucleotide binding. Diphosphate contacts are provided by His229 and Arg293. His229 carries the phosphohistidine; by autocatalysis modification. Beta-nicotinamide D-ribonucleotide is bound by residues Asp335 and Arg373.

The protein belongs to the NAPRTase family. As to quaternary structure, homodimer. The dimeric structure consists of two protomers arranged head to tail, with domain A on one protomer interacting with domain B on the other protomer. Phosphorylation at His-229 plays a crucial role in enhancing the substrate affinity and is important for maintaining enzymatic activity.

It carries out the reaction beta-nicotinamide D-ribonucleotide + diphosphate = 5-phospho-alpha-D-ribose 1-diphosphate + nicotinamide + H(+). The protein operates within cofactor biosynthesis; NAD(+) biosynthesis; nicotinamide D-ribonucleotide from 5-phospho-alpha-D-ribose 1-diphosphate and nicotinamide: step 1/1. ATP-dependent autophosphorylation plays a vital role in nicotinamide binding and enzyme activation. Activity is inhibited by FK866. Catalyzes the condensation of nicotinamide with 5-phosphoribosyl-1-pyrophosphate to yield nicotinamide mononucleotide, an intermediate in the biosynthesis of NAD. Plays an important role in the biosynthesis of NAD via the nicotinamide (NAM) salvage pathway. Is also capable of hydrolyzing ATP and shows ATP-dependent autophosphorylation activity. The sequence is that of Nicotinamide phosphoribosyltransferase from Xanthomonas campestris pv. campestris (strain 8004).